We begin with the raw amino-acid sequence, 488 residues long: Bifunctional protein GlmU (488 aa).

The interval 1-237 (MPRTRTPLAA…VEEASGVNDR (237 aa)) is pyrophosphorylase. Residues 13–16 (LAAG), Lys27, Gln82, 87–88 (GT), 110–112 (SGD), Gly149, Glu164, Asn179, and Asn235 each bind UDP-N-acetyl-alpha-D-glucosamine. Asp112 is a Mg(2+) binding site. Residue Asn235 coordinates Mg(2+). Residues 238–258 (VELSRANRVMVGRLAEAFMRA) form a linker region. The interval 259–488 (GVTIEDPARF…KGRPAARRAS (230 aa)) is N-acetyltransferase. The UDP-N-acetyl-alpha-D-glucosamine site is built by Arg341 and Lys359. Catalysis depends on His371, which acts as the Proton acceptor. UDP-N-acetyl-alpha-D-glucosamine-binding residues include Tyr374 and Asn385. Residues Ala388, 394 to 395 (NY), Ser413, Ala431, and Arg448 contribute to the acetyl-CoA site. Residues 459 to 488 (AQRQAEKQMKGTATGPASARKGRPAARRAS) are disordered. A compositionally biased stretch (basic residues) spans 478 to 488 (RKGRPAARRAS).

This sequence in the N-terminal section; belongs to the N-acetylglucosamine-1-phosphate uridyltransferase family. The protein in the C-terminal section; belongs to the transferase hexapeptide repeat family. As to quaternary structure, homotrimer. Requires Mg(2+) as cofactor.

It localises to the cytoplasm. It carries out the reaction alpha-D-glucosamine 1-phosphate + acetyl-CoA = N-acetyl-alpha-D-glucosamine 1-phosphate + CoA + H(+). The enzyme catalyses N-acetyl-alpha-D-glucosamine 1-phosphate + UTP + H(+) = UDP-N-acetyl-alpha-D-glucosamine + diphosphate. It functions in the pathway nucleotide-sugar biosynthesis; UDP-N-acetyl-alpha-D-glucosamine biosynthesis; N-acetyl-alpha-D-glucosamine 1-phosphate from alpha-D-glucosamine 6-phosphate (route II): step 2/2. It participates in nucleotide-sugar biosynthesis; UDP-N-acetyl-alpha-D-glucosamine biosynthesis; UDP-N-acetyl-alpha-D-glucosamine from N-acetyl-alpha-D-glucosamine 1-phosphate: step 1/1. Its pathway is bacterial outer membrane biogenesis; LPS lipid A biosynthesis. Functionally, catalyzes the last two sequential reactions in the de novo biosynthetic pathway for UDP-N-acetylglucosamine (UDP-GlcNAc). The C-terminal domain catalyzes the transfer of acetyl group from acetyl coenzyme A to glucosamine-1-phosphate (GlcN-1-P) to produce N-acetylglucosamine-1-phosphate (GlcNAc-1-P), which is converted into UDP-GlcNAc by the transfer of uridine 5-monophosphate (from uridine 5-triphosphate), a reaction catalyzed by the N-terminal domain. This chain is Bifunctional protein GlmU, found in Anaeromyxobacter sp. (strain K).